Here is a 92-residue protein sequence, read N- to C-terminus: Large ribosomal subunit protein eL31 (92 aa).

The protein belongs to the eukaryotic ribosomal protein eL31 family.

The chain is Large ribosomal subunit protein eL31 from Halobacterium salinarum (strain ATCC 29341 / DSM 671 / R1).